Consider the following 589-residue polypeptide: Putative phospholipase B-like 2 (589 aa).

Positions 1 to 41 (MVGQMYCYPGSHLARALTRALALALVLALLVGPFLSGLAGA) are cleaved as a signal peptide. N-linked (GlcNAc...) asparagine glycosylation is found at N88 and N110. C142 and C152 are disulfide-bonded. N231, N436, and N465 each carry an N-linked (GlcNAc...) asparagine glycan. C492 and C495 form a disulfide bridge. A glycan (N-linked (GlcNAc...) asparagine) is linked at N515.

The protein belongs to the phospholipase B-like family. In terms of assembly, interacts with IGF2R. Post-translationally, the p76 protein is synthesized as a 80 kDa precursor which is then processed into a N-terminal 32 kDa form and a C-terminal 45 kDa form. Glycosylated; contains mannose 6-phosphate sugars. In terms of tissue distribution, ubiquitously expressed, with highest levels in heart, brain and liver.

It is found in the lysosome lumen. In terms of biological role, putative phospholipase. In Homo sapiens (Human), this protein is Putative phospholipase B-like 2 (PLBD2).